We begin with the raw amino-acid sequence, 330 residues long: GMP reductase (330 aa).

Cysteine 180 functions as the Thioimidate intermediate in the catalytic mechanism. Residue 209-232 (LIADGGIRHNGDIAKSVRFGASMV) coordinates NADP(+).

The protein belongs to the IMPDH/GMPR family. GuaC type 2 subfamily.

The catalysed reaction is IMP + NH4(+) + NADP(+) = GMP + NADPH + 2 H(+). Catalyzes the irreversible NADPH-dependent deamination of GMP to IMP. It functions in the conversion of nucleobase, nucleoside and nucleotide derivatives of G to A nucleotides, and in maintaining the intracellular balance of A and G nucleotides. The chain is GMP reductase from Lactobacillus delbrueckii subsp. bulgaricus (strain ATCC BAA-365 / Lb-18).